Here is a 70-residue protein sequence, read N- to C-terminus: Putative membrane protein insertion efficiency factor (70 aa).

This sequence belongs to the UPF0161 family.

The protein localises to the cell membrane. Its function is as follows. Could be involved in insertion of integral membrane proteins into the membrane. This Clostridium novyi (strain NT) protein is Putative membrane protein insertion efficiency factor.